Reading from the N-terminus, the 364-residue chain is Probable protein disulfide-isomerase A6 (364 aa).

The signal sequence occupies residues 1–28 (MKMEMHQIWSRIALASFAFAILFVSVSA). Thioredoxin domains lie at 29-137 (DDVV…TEGG) and 139-256 (NVKI…EKSG). Active-site nucleophile residues include cysteine 58, cysteine 61, cysteine 177, and cysteine 180. Intrachain disulfides connect cysteine 58–cysteine 61 and cysteine 177–cysteine 180.

Belongs to the protein disulfide isomerase family.

It localises to the endoplasmic reticulum lumen. The catalysed reaction is Catalyzes the rearrangement of -S-S- bonds in proteins.. The chain is Probable protein disulfide-isomerase A6 from Medicago sativa (Alfalfa).